The following is a 495-amino-acid chain: Probable leucine aminopeptidase 2 (495 aa).

The signal sequence occupies residues 1-21 (MKSQLLSLAVAVTTISQGVVG). Residues 130–216 (MAELVVAKNN…SQEDGKNLAT (87 aa)) form the PA domain. Residues N142 and N235 are each glycosylated (N-linked (GlcNAc...) asparagine). Positions 259 and 271 each coordinate Zn(2+). N-linked (GlcNAc...) asparagine glycosylation is present at N272. The active-site Proton acceptor is the E303. 2 residues coordinate Zn(2+): E304 and D332. A glycan (N-linked (GlcNAc...) asparagine) is linked at N352. H430 is a Zn(2+) binding site.

This sequence belongs to the peptidase M28 family. M28A subfamily. In terms of assembly, monomer. It depends on Zn(2+) as a cofactor.

It is found in the secreted. Its function is as follows. Extracellular aminopeptidase that releases a wide variety of amino acids from natural peptides and contributes to pathogenicity. The chain is Probable leucine aminopeptidase 2 (LAP2) from Arthroderma benhamiae (strain ATCC MYA-4681 / CBS 112371) (Trichophyton mentagrophytes).